Reading from the N-terminus, the 702-residue chain is Polyribonucleotide nucleotidyltransferase (702 aa).

Positions 485 and 491 each coordinate Mg(2+). Residues 552 to 612 form the KH domain; sequence PRTEIICIDP…EGVKKAISII (61 aa). Positions 622–690 constitute an S1 motif domain; the sequence is GEIYLGKVTK…NQGRINLSRK (69 aa).

This sequence belongs to the polyribonucleotide nucleotidyltransferase family. Mg(2+) serves as cofactor.

The protein localises to the cytoplasm. It carries out the reaction RNA(n+1) + phosphate = RNA(n) + a ribonucleoside 5'-diphosphate. Involved in mRNA degradation. Catalyzes the phosphorolysis of single-stranded polyribonucleotides processively in the 3'- to 5'-direction. The protein is Polyribonucleotide nucleotidyltransferase of Clostridium botulinum (strain ATCC 19397 / Type A).